The sequence spans 1048 residues: Integrin alpha-V (1048 aa).

Residues 1 to 30 form the signal peptide; the sequence is MAFPPRRRLRLGPRGLPLLLSGLLLPLCRA. The Extracellular segment spans residues 31–992; it reads FNLDVESPAE…WGIQPAPMPV (962 aa). FG-GAP repeat units follow at residues 32 to 98, 109 to 170, 173 to 225, 237 to 291, 292 to 357, 358 to 415, and 419 to 482; these read NLDV…RRCQ, DYAK…VEYA, RSKN…VSKY, QLAT…GKNM, SSLH…GDFQ, TIKL…GLNA, and QILE…VYPS. N-linked (GlcNAc...) asparagine glycosylation occurs at Asn74. Disulfide bonds link Cys89/Cys97, Cys138/Cys158, and Cys172/Cys185. Residues Asp260, Asn262, Asp264, Ile266, and Asp268 each contribute to the Ca(2+) site. 2 N-linked (GlcNAc...) asparagine glycosylation sites follow: Asn290 and Asn296. Asp314, Asn316, Asp318, Tyr320, Asp322, Asp379, Asp381, Asp383, Phe385, Asp387, Asp443, Asp445, Asn447, Tyr449, and Asp451 together coordinate Ca(2+). Asn488 is a glycosylation site (N-linked (GlcNAc...) asparagine). 2 cysteine pairs are disulfide-bonded: Cys491–Cys502 and Cys508–Cys565. N-linked (GlcNAc...) asparagine glycans are attached at residues Asn554 and Asn615. 2 cysteine pairs are disulfide-bonded: Cys626/Cys632 and Cys698/Cys711. Residues Asn704, Asn835, Asn851, and Asn874 are each glycosylated (N-linked (GlcNAc...) asparagine). Intrachain disulfides connect Cys852/Cys914 and Cys904/Cys909. Asn945, Asn973, and Asn980 each carry an N-linked (GlcNAc...) asparagine glycan. The helical transmembrane segment at 993–1016 threads the bilayer; the sequence is PVWVIILAVLAGLLLLAVLVFVMY. Residues 1017–1048 are Cytoplasmic-facing; the sequence is RMGFFKRVRPPQEEQEREQLQPHENGEGNSET. The short motif at 1019-1023 is the GFFKR motif element; it reads GFFKR. Basic and acidic residues predominate over residues 1027 to 1042; it reads PQEEQEREQLQPHENG. Positions 1027–1048 are disordered; it reads PQEEQEREQLQPHENGEGNSET.

It belongs to the integrin alpha chain family. In terms of assembly, heterodimer of an alpha and a beta subunit. The alpha subunit is composed of a heavy and a light chain linked by a disulfide bond. Alpha-V (ITGAV) associates with either beta-1 (ITGB1), beta-3 (ITGB3), beta-5 (ITGB5), beta-6 (ITGB6) or beta-8 (ITGB8). Interacts with RAB25. Interacts with CIB1. Integrins ITGAV:ITGB3 and ITGAV:ITGB5 interact with FBLN5 (via N-terminus). ITGAV:ITGB3 and ITGAV:ITGB5 interact with CCN3. ITGAV:ITGB3 interacts with ADGRA2. ITGAV:ITGB3 interacts with FGF2; it is likely that FGF2 can simultaneously bind ITGAV:ITGB3 and FGF receptors. ITGAV:ITGB3 interacts with SELP (via C-type lectin domain); the interaction mediates cell-cell interaction and adhesion. ITGAV:ITGB3 is found in a ternary complex with CX3CR1 and CX3CL1. ITGAV:ITGB3 is found in a ternary complex with NRG1 and ERBB3. ITGAV:ITGB3 is found in a ternary complex with FGF1 and FGFR1. ITGAV:ITGB3 is found in a ternary complex with IGF1 and IGF1R. ITGAV:ITGB3 interacts with IGF2. ITGAV:ITGB3 and ITGAV:ITGB6 interact with FBN1. ITGAV:ITGB3 interacts with CD9, CD81 and CD151 (via second extracellular domain). ITGAV:ITGB6 interacts with TGFB1. ITGAV:ITGB3 interacts with PTN. Forms a complex with PTPRZ1 and PTN that stimulates endothelial cell migration through ITGB3 'Tyr-773' phosphorylation. Interacts with TM4SF19. As to quaternary structure, (Microbial infection) Alpha-V/beta-6 and alpha-V/beta-3 bind to foot-and-mouth disease virus (FMDV) VP1 protein and acts as a receptor for this virus.

The protein localises to the cell membrane. Its subcellular location is the cell junction. The protein resides in the focal adhesion. Functionally, the alpha-V (ITGAV) integrins are receptors for vitronectin, cytotactin, fibronectin, fibrinogen, laminin, matrix metalloproteinase-2, osteopontin, osteomodulin, prothrombin, thrombospondin, TGFB1 and vWF. They recognize the sequence R-G-D in a wide array of ligands. Alpha-V integrins may play a role in embryo implantation, angiogenesis and wound healing. ITGAV:ITGB3 binds to fractalkine (CX3CL1) and may act as its coreceptor in CX3CR1-dependent fractalkine signaling. ITGAV:ITGB3 binds to NRG1 (via EGF domain) and this binding is essential for NRG1-ERBB signaling. ITGAV:ITGB3 binds to FGF1 and this binding is essential for FGF1 signaling. ITGAV:ITGB3 binds to FGF2 and this binding is essential for FGF2 signaling. ITGAV:ITGB3 binds to IGF1 and this binding is essential for IGF1 signaling. ITGAV:ITGB3 binds to IGF2 and this binding is essential for IGF2 signaling. ITGAV:ITGB3 binds to IL1B and this binding is essential for IL1B signaling. ITGAV:ITGB3 binds to PLA2G2A via a site (site 2) which is distinct from the classical ligand-binding site (site 1) and this induces integrin conformational changes and enhanced ligand binding to site 1. ITGAV:ITGB3 and ITGAV:ITGB6 act as receptors for fibrillin-1 (FBN1) and mediate R-G-D-dependent cell adhesion to FBN1. Integrin alpha-V/beta-6 or alpha-V/beta-8 (ITGAV:ITGB6 or ITGAV:ITGB8) mediates R-G-D-dependent release of transforming growth factor beta-1 (TGF-beta-1) from regulatory Latency-associated peptide (LAP), thereby playing a key role in TGF-beta-1 activation. ITGAV:ITGB3 acts as a receptor for CD40LG. ITGAV:ITGB3 acts as a receptor for IBSP and promotes cell adhesion and migration to IBSP. The sequence is that of Integrin alpha-V (ITGAV) from Bos taurus (Bovine).